We begin with the raw amino-acid sequence, 559 residues long: Protein QNR-71 (559 aa).

The N-terminal stretch at 1 to 22 (MSQAHRHLALLLPAEAVLCAAA) is a signal peptide. At 23–487 (MRFQDVLSNG…NGGSSSGTTK (465 aa)) the chain is on the extracellular side. N-linked (GlcNAc...) asparagine glycans are attached at residues N92, N133, N145, N149, N192, N199, N248, N274, N307, and N311. The PKD domain maps to 239–326 (VSMSQKHDRN…IIPVPCKPVT (88 aa)). Residues 329–356 (PSLPTPAVTTDASSNSDPSAPNEMAEDN) are disordered. Positions 335 to 347 (AVTTDASSNSDPS) are enriched in polar residues. N-linked (GlcNAc...) asparagine glycosylation occurs at N459. Residues 488–508 (GVFIFLGLLAVFGAIGAFVLY) traverse the membrane as a helical segment. Over 509–559 (KRYKQYKPIERSAGQAENQEGLSAYVSNFKAFFFPKSTERNPLLKSKPGIV) the chain is Cytoplasmic.

Belongs to the PMEL/NMB family. In terms of tissue distribution, melanocyte-specific, restricted to the pigmented layer of the retina and the epidermis.

It localises to the membrane. Could be involved in melanogenesis. The chain is Protein QNR-71 (QNR-71) from Coturnix japonica (Japanese quail).